The sequence spans 204 residues: Factor arrest protein 3 (204 aa).

In terms of assembly, component of a complex at least composed of FAR3, FAR7, FAR8, FAR10, FAR11 and VPS64.

It localises to the endoplasmic reticulum. Its function is as follows. Participates in the control of the reentry into the cell cycle following pheromone treatment. In Saccharomyces cerevisiae (strain ATCC 204508 / S288c) (Baker's yeast), this protein is Factor arrest protein 3 (FAR3).